The primary structure comprises 1403 residues: Baculoviral IAP repeat-containing protein 1e (1403 aa).

3 BIR repeats span residues 60-127 (EAKR…CEFL), 159-227 (EEAR…CEFL), and 278-345 (EELR…CVFL). Cysteine 315, cysteine 318, histidine 335, and cysteine 342 together coordinate Zn(2+). The NACHT domain occupies 464–759 (SVMCVEGETG…EFLAAVRLTE (296 aa)). 473 to 478 (GSGKTT) is a binding site for ATP.

In terms of assembly, component of the NLRC4 inflammasome, at least composed of NLRC4, caspase-1 (CASP1) and some NAIP protein. Flagellin binding by NAIP5 triggers assembly of the inflammasome, a huge complex that contains a single NAIP5 chain and multiple copies of NLRC4. (Microbial infection) Interacts with S.typhimurium (Salmonella) flagellin. As to quaternary structure, (Microbial infection) Interacts with L.pneumophila flagellin. Detected in macrophages (at protein level).

Sensor component of the NLRC4 inflammasome that specifically recognizes and binds flagellin from pathogenic bacteria such as Legionella or Salmonella. Association of pathogenic bacteria proteins drives in turn drive assembly and activation of the NLRC4 inflammasome, promoting caspase-1 activation, cytokine production and macrophage pyroptosis. The NLRC4 inflammasome is activated as part of the innate immune response to a range of intracellular bacteria. The NLRC4 inflammasome senses Gram-negative bacteria such as L.pneumophila and P.aeruginosa, enteric pathogens S.typhimurium (Salmonella) and S.flexneri. May contribute to prevent motor-neuron apoptosis induced by a variety of signals. The sequence is that of Baculoviral IAP repeat-containing protein 1e from Mus musculus (Mouse).